The chain runs to 348 residues: D-alanine--D-alanine ligase (348 aa).

Positions 132 to 334 (KRVLESAGIP…YAELIEELVR (203 aa)) constitute an ATP-grasp domain. Residue 162–217 (EAVLSYPVFVKPANMGSSVGISKAESEEELRAAILLALTYDSRILIEQGVLAREIE) participates in ATP binding. Positions 288, 301, and 303 each coordinate Mg(2+).

This sequence belongs to the D-alanine--D-alanine ligase family. The cofactor is Mg(2+). Requires Mn(2+) as cofactor.

Its subcellular location is the cytoplasm. It catalyses the reaction 2 D-alanine + ATP = D-alanyl-D-alanine + ADP + phosphate + H(+). The protein operates within cell wall biogenesis; peptidoglycan biosynthesis. Functionally, cell wall formation. The protein is D-alanine--D-alanine ligase of Streptococcus equi subsp. equi (strain 4047).